Reading from the N-terminus, the 91-residue chain is Acylphosphatase (91 aa).

The Acylphosphatase-like domain maps to 3–89 (AKHLILSGRV…PAEPGFVKRA (87 aa)). Active-site residues include arginine 18 and asparagine 36.

The protein belongs to the acylphosphatase family.

It catalyses the reaction an acyl phosphate + H2O = a carboxylate + phosphate + H(+). This chain is Acylphosphatase (acyP), found in Acidiphilium cryptum (strain JF-5).